We begin with the raw amino-acid sequence, 387 residues long: 4-hydroxy-3-methylbut-2-en-1-yl diphosphate synthase (flavodoxin) (387 aa).

[4Fe-4S] cluster-binding residues include cysteine 280, cysteine 283, cysteine 315, and glutamate 322.

This sequence belongs to the IspG family. [4Fe-4S] cluster is required as a cofactor.

It carries out the reaction (2E)-4-hydroxy-3-methylbut-2-enyl diphosphate + oxidized [flavodoxin] + H2O + 2 H(+) = 2-C-methyl-D-erythritol 2,4-cyclic diphosphate + reduced [flavodoxin]. Its pathway is isoprenoid biosynthesis; isopentenyl diphosphate biosynthesis via DXP pathway; isopentenyl diphosphate from 1-deoxy-D-xylulose 5-phosphate: step 5/6. Converts 2C-methyl-D-erythritol 2,4-cyclodiphosphate (ME-2,4cPP) into 1-hydroxy-2-methyl-2-(E)-butenyl 4-diphosphate. This is 4-hydroxy-3-methylbut-2-en-1-yl diphosphate synthase (flavodoxin) from Mycobacterium bovis (strain BCG / Pasteur 1173P2).